A 266-amino-acid polypeptide reads, in one-letter code: Glucosamine-6-phosphate deaminase (266 aa).

D72 serves as the catalytic Proton acceptor; for enolization step. D141 (for ring-opening step) is an active-site residue. The active-site Proton acceptor; for ring-opening step is H143. E148 serves as the catalytic For ring-opening step.

The protein belongs to the glucosamine/galactosamine-6-phosphate isomerase family. NagB subfamily. Homohexamer.

It catalyses the reaction alpha-D-glucosamine 6-phosphate + H2O = beta-D-fructose 6-phosphate + NH4(+). The protein operates within amino-sugar metabolism; N-acetylneuraminate degradation; D-fructose 6-phosphate from N-acetylneuraminate: step 5/5. Allosterically activated by N-acetylglucosamine 6-phosphate (GlcNAc6P). Functionally, catalyzes the reversible isomerization-deamination of glucosamine 6-phosphate (GlcN6P) to form fructose 6-phosphate (Fru6P) and ammonium ion. The polypeptide is Glucosamine-6-phosphate deaminase (Aliivibrio fischeri (strain ATCC 700601 / ES114) (Vibrio fischeri)).